The following is a 344-amino-acid chain: Acireductone dioxygenase (344 aa).

The Fe(2+) site is built by histidine 92, histidine 94, glutamate 98, and histidine 137. 4 residues coordinate Ni(2+): histidine 92, histidine 94, glutamate 98, and histidine 137.

This sequence belongs to the acireductone dioxygenase (ARD) family. It depends on Fe(2+) as a cofactor. Requires Ni(2+) as cofactor.

It is found in the cytoplasm. It localises to the nucleus. It catalyses the reaction 1,2-dihydroxy-5-(methylsulfanyl)pent-1-en-3-one + O2 = 4-methylsulfanyl-2-oxobutanoate + formate + 2 H(+). The enzyme catalyses 1,2-dihydroxy-5-(methylsulfanyl)pent-1-en-3-one + O2 = 3-(methylsulfanyl)propanoate + CO + formate + 2 H(+). It participates in amino-acid biosynthesis; L-methionine biosynthesis via salvage pathway; L-methionine from S-methyl-5-thio-alpha-D-ribose 1-phosphate: step 5/6. In terms of biological role, catalyzes 2 different reactions between oxygen and the acireductone 1,2-dihydroxy-3-keto-5-methylthiopentene (DHK-MTPene) depending upon the metal bound in the active site. Fe-containing acireductone dioxygenase (Fe-ARD) produces formate and 2-keto-4-methylthiobutyrate (KMTB), the alpha-ketoacid precursor of methionine in the methionine recycle pathway. Ni-containing acireductone dioxygenase (Ni-ARD) produces methylthiopropionate, carbon monoxide and formate, and does not lie on the methionine recycle pathway. The polypeptide is Acireductone dioxygenase (Leishmania infantum).